Here is a 258-residue protein sequence, read N- to C-terminus: Acetylglutamate kinase (258 aa).

Substrate-binding positions include 44–45 (GG), Arg66, and Asn158. ATP is bound by residues 181–186 (DVSGIL) and 209–211 (IIT).

This sequence belongs to the acetylglutamate kinase family. ArgB subfamily. Homodimer.

It localises to the cytoplasm. It catalyses the reaction N-acetyl-L-glutamate + ATP = N-acetyl-L-glutamyl 5-phosphate + ADP. It functions in the pathway amino-acid biosynthesis; L-arginine biosynthesis; N(2)-acetyl-L-ornithine from L-glutamate: step 2/4. In terms of biological role, catalyzes the ATP-dependent phosphorylation of N-acetyl-L-glutamate. The polypeptide is Acetylglutamate kinase (Klebsiella pneumoniae subsp. pneumoniae (strain ATCC 700721 / MGH 78578)).